A 139-amino-acid polypeptide reads, in one-letter code: MTERTFSIIKPDATRRNLTGKINAVIEEAGLRIVAQRRVKLTDAQAKKFYEVHAERPFYGELVAQMTAEPVVVQVLEGDNAVLKYREVMGATNPDNADEGTIRKLFALSIGENSVHGSDSLENAAIEIAQFFKDEDIVG.

Positions 10, 58, 86, 92, 103, and 113 each coordinate ATP. Residue His-116 is the Pros-phosphohistidine intermediate of the active site.

The protein belongs to the NDK family. As to quaternary structure, homotetramer. The cofactor is Mg(2+).

The protein localises to the cytoplasm. It carries out the reaction a 2'-deoxyribonucleoside 5'-diphosphate + ATP = a 2'-deoxyribonucleoside 5'-triphosphate + ADP. It catalyses the reaction a ribonucleoside 5'-diphosphate + ATP = a ribonucleoside 5'-triphosphate + ADP. Its function is as follows. Major role in the synthesis of nucleoside triphosphates other than ATP. The ATP gamma phosphate is transferred to the NDP beta phosphate via a ping-pong mechanism, using a phosphorylated active-site intermediate. This is Nucleoside diphosphate kinase from Caulobacter sp. (strain K31).